The chain runs to 156 residues: Snaclec 2 (156 aa).

The first 21 residues, 1–21 (MGRFIFLSSGLLVVFLSLSGA), serve as a signal peptide directing secretion. 3 disulfides stabilise this stretch: Cys25/Cys36, Cys53/Cys150, and Cys125/Cys142. Positions 32 to 151 (FDQHCYRAFD…CGDDYPFVCK (120 aa)) constitute a C-type lectin domain.

Belongs to the snaclec family. Heterodimer; disulfide-linked. Expressed by the venom gland.

It localises to the secreted. In terms of biological role, interferes with one step of hemostasis (modulation of platelet aggregation, or coagulation cascade, for example). The polypeptide is Snaclec 2 (Bitis gabonica (Gaboon adder)).